Here is a 434-residue protein sequence, read N- to C-terminus: Serine/threonine-protein kinase Sgk1-B (434 aa).

The tract at residues 68–94 (ESELLNENSSPPPSHSQQINLGPSSNP) is disordered. The Protein kinase domain occupies 101–358 (FQFLKIIGKG…FMEIKNHIFF (258 aa)). Residues 107-115 (IGKGSFGKV) and Lys130 contribute to the ATP site. Asp225 acts as the Proton acceptor in catalysis. The 76-residue stretch at 359–434 (SPIDWDDLIN…SYAPPMDSYL (76 aa)) folds into the AGC-kinase C-terminal domain.

This sequence belongs to the protein kinase superfamily. AGC Ser/Thr protein kinase family.

Its subcellular location is the cytoplasm. The protein localises to the nucleus. It is found in the endoplasmic reticulum. It catalyses the reaction L-seryl-[protein] + ATP = O-phospho-L-seryl-[protein] + ADP + H(+). The enzyme catalyses L-threonyl-[protein] + ATP = O-phospho-L-threonyl-[protein] + ADP + H(+). Protein kinase that may play an important role in cellular stress response. Plays an important role in activating certain potassium, sodium, and chloride channels, suggesting an involvement in the regulation of processes such as cell survival, neuronal excitability and renal sodium excretion. This is Serine/threonine-protein kinase Sgk1-B (sgk1-b) from Xenopus laevis (African clawed frog).